Reading from the N-terminus, the 684-residue chain is Fermitin family homolog 2 (684 aa).

Residues 40–81 form an interaction with membranes containing phosphatidylinositol phosphate region; that stretch reads HIGGVMLKLVEKLDVKKDWSDHALWWEKKKTWLLKTHWTLDK. The tract at residues 141–163 is disordered; the sequence is LRKPRDPKKKKKKLEDAEEETLE. In terms of domain architecture, FERM spans 279–577; sequence DLNPKYDAIR…SLPEFGITHF (299 aa). Residues 378–474 form the PH domain; it reads KVFKPKKLTL…WMAACRLASK (97 aa). Position 381 (K381) interacts with a 1,2-diacyl-sn-glycero-3-phospho-(1D-myo-inositol-3,4,5-trisphosphate).

Belongs to the kindlin family.

The protein resides in the cytoplasm. It is found in the cell cortex. Its subcellular location is the cytoskeleton. The protein localises to the stress fiber. It localises to the cell junction. The protein resides in the focal adhesion. It is found in the membrane. Its subcellular location is the cell projection. The protein localises to the lamellipodium membrane. It localises to the nucleus. The protein resides in the myofibril. It is found in the sarcomere. Its subcellular location is the i band. The protein localises to the cell surface. In terms of biological role, scaffolding protein that enhances integrin activation mediated by TLN1 and/or TLN2, but activates integrins only weakly by itself. Binds to membranes enriched in phosphoinositides. Enhances integrin-mediated cell adhesion onto the extracellular matrix and cell spreading; this requires both its ability to interact with integrins and with phospholipid membranes. Required for the assembly of focal adhesions. Participates in the connection between extracellular matrix adhesion sites and the actin cytoskeleton and also in the orchestration of actin assembly and cell shape modulation. Plays a role in the TGFB1 and integrin signaling pathways. Stabilizes active CTNNB1 and plays a role in the regulation of transcription mediated by CTNNB1 and TCF7L2/TCF4 and in Wnt signaling. Required for normal embryonic development, including normal heart morphogenesis and normal angiogenesis. The protein is Fermitin family homolog 2 (fermt2) of Danio rerio (Zebrafish).